The sequence spans 904 residues: Disks large homolog 1 (904 aa).

In terms of domain architecture, L27 spans 4–64; that stretch reads RKQDTQRALH…FYEVTLLDNP (61 aa). Phosphothreonine is present on Thr-115. 3 positions are modified to phosphoserine: Ser-122, Ser-138, and Ser-158. The tract at residues 162-212 is interaction with SH3 domains; sequence PTEAVLPSPPTVPVIPVLPVPAENTVILPTIPQANPPPVLVNTDSLETPTY. 3 PDZ domains span residues 224 to 310, 319 to 405, and 466 to 546; these read EITL…VKRR, EIKL…VAKP, and KVVL…AQYR. The segment at 224–546 is required for interaction with MARCHF2; sequence EITLERGNSG…QAVTIVAQYR (323 aa). Position 232 is a phosphoserine (Ser-232). Tyr-399 is modified (phosphotyrosine). Ser-568, Ser-573, Ser-575, Ser-579, Ser-598, Ser-619, Ser-676, Ser-684, Ser-687, Gln-709, and Ser-834 each carry phosphoserine. One can recognise an SH3 domain in the interval 581-651; it reads KRSLYVRALF…PSKRRVEKKE (71 aa). A disordered region spans residues 662 to 693; it reads SKTRDKGEIPDDMGSKGLKHVTSNASDSESSY. A compositionally biased stretch (polar residues) spans 682-693; sequence VTSNASDSESSY. The 176-residue stretch at 714–889 folds into the Guanylate kinase-like domain; sequence TRPVIILGPM…IYNQVKQIIE (176 aa).

This sequence belongs to the MAGUK family. As to quaternary structure, homotetramer. Interacts (via guanylate kinase-like domain) with DLGAP1, DLGAP2, DLGAP3, DLGAP4 and MAP1A. Interacts (via guanylate kinase-like domain) with KIF13B. May interact with HTR2A. Interacts (via PDZ domains) with GRIA1. Interacts (via PDZ domains) with GRIN2A. Interacts (via PDZ domains) with KCND2 and KCND3. Interacts (via PDZ domains) with KCNA1, KCNA2, KCNA3 and KCNA4. Interacts (via PDZ domains) with ADGRA3. Interacts with KCNF1. Interacts with CAMK2. Interacts with cytoskeleton-associated protein EPB41. Interacts with cytoskeleton-associated protein EZR. Found in a complex with KCNA5 and CAV3. Found in a complex with APC and CTNNB1. Interacts (via PDZ domains) with APC. Interacts with CDH1 through binding to PIK3R1. Forms multiprotein complexes with CASK, LIN7A, LIN7B, LIN7C, APBA1, and KCNJ12. Interacts with TOPK. Forms a tripartite complex composed of DLG1, MPP7 and LIN7 (LIN7A or LIN7C). May interact with TJAP1. Interacts with PTEN. Interacts with FRMPD4 (via C-terminus). Interacts with LRFN1, LRFN2 and LRFN4. Interacts with SFPQ. Interacts (via PDZ domains) with ADGRA2 (via PDZ-binding motif). Interacts with ADAM10; this interaction recruits ADAM10 to the cell membrane during long-term depression in hippocampal neurons. Interacts with DGKI (via PDZ-binding motif). Interacts (via PDZ domains) with MARCHF2 (via PDZ domain); the interaction leads to DLG1 ubiqtuitination and degradation. Interacts (via N-terminus) with MPP3; this interaction connects CADM1 with DLG1 and links CADM1 with the regulatory subunit of phosphoinositide-3-kinase (PI3K) by forming a multiprotein complex and participates in cell spreading. In terms of assembly, (Microbial infection) Interacts with HTLV-1 protein Tax. (Microbial infection) Interacts (via PDZ domains 1 and 2) with influenza A virus protein NS1; the interaction results in the translocation of DLG1 from the cell membrane to perinuclear puncta. Acts as a scaffold protein to facilitate the interaction between LIN7C and influenza A virus protein NS1; the interaction facilitates translocation of LIN7C to cytoplasmic puncta. As to quaternary structure, (Microbial infection) Interacts with human papillomavirus 18/HPV-18 protein E6. In terms of processing, phosphorylated by MAPK12. Phosphorylation of Ser-232 regulates association with GRIN2A. Ubiquitinated; by MARCHF2 which results in its degradation. Abundantly expressed in atrial myocardium (at protein level). Expressed in lung fibroblasts, cervical epithelial and B-cells (at protein level). Expressed in the brain (at protein level). Widely expressed, with isoforms displaying different expression profiles.

It is found in the cell membrane. The protein resides in the basolateral cell membrane. The protein localises to the endoplasmic reticulum membrane. It localises to the postsynaptic density. Its subcellular location is the synapse. It is found in the sarcolemma. The protein resides in the apical cell membrane. The protein localises to the cell junction. It localises to the cytoplasm. In terms of biological role, essential multidomain scaffolding protein required for normal development. Recruits channels, receptors and signaling molecules to discrete plasma membrane domains in polarized cells. Promotes epithelial cell layer barrier function via maintaining cell-cell adhesion. May also play a role in adherens junction assembly, signal transduction, cell proliferation, synaptogenesis and lymphocyte activation. Regulates the excitability of cardiac myocytes by modulating the functional expression of Kv4 channels. Functional regulator of Kv1.5 channel. During long-term depression in hippocampal neurons, it recruits ADAM10 to the plasma membrane. The sequence is that of Disks large homolog 1 from Homo sapiens (Human).